A 510-amino-acid chain; its full sequence is ATP synthase subunit alpha, chloroplastic (510 aa).

Residue 170-177 (GDRQTGKT) coordinates ATP.

Belongs to the ATPase alpha/beta chains family. In terms of assembly, F-type ATPases have 2 components, CF(1) - the catalytic core - and CF(0) - the membrane proton channel. CF(1) has five subunits: alpha(3), beta(3), gamma(1), delta(1), epsilon(1). CF(0) has four main subunits: a, b, b' and c.

It is found in the plastid. The protein resides in the chloroplast thylakoid membrane. It carries out the reaction ATP + H2O + 4 H(+)(in) = ADP + phosphate + 5 H(+)(out). Produces ATP from ADP in the presence of a proton gradient across the membrane. The alpha chain is a regulatory subunit. This is ATP synthase subunit alpha, chloroplastic from Phaseolus vulgaris (Kidney bean).